Reading from the N-terminus, the 234-residue chain is tRNA (guanine-N(1)-)-methyltransferase (234 aa).

Residues Gly-115 and 135–140 each bind S-adenosyl-L-methionine; that span reads VGDYIL.

It belongs to the RNA methyltransferase TrmD family. Homodimer.

Its subcellular location is the cytoplasm. The catalysed reaction is guanosine(37) in tRNA + S-adenosyl-L-methionine = N(1)-methylguanosine(37) in tRNA + S-adenosyl-L-homocysteine + H(+). Its function is as follows. Specifically methylates guanosine-37 in various tRNAs. This chain is tRNA (guanine-N(1)-)-methyltransferase, found in Rickettsia peacockii (strain Rustic).